A 179-amino-acid polypeptide reads, in one-letter code: Large ribosomal subunit protein uL5 (179 aa).

It belongs to the universal ribosomal protein uL5 family. Part of the 50S ribosomal subunit; part of the 5S rRNA/L5/L18/L25 subcomplex. Contacts the 5S rRNA and the P site tRNA. Forms a bridge to the 30S subunit in the 70S ribosome.

Functionally, this is one of the proteins that bind and probably mediate the attachment of the 5S RNA into the large ribosomal subunit, where it forms part of the central protuberance. In the 70S ribosome it contacts protein S13 of the 30S subunit (bridge B1b), connecting the 2 subunits; this bridge is implicated in subunit movement. Contacts the P site tRNA; the 5S rRNA and some of its associated proteins might help stabilize positioning of ribosome-bound tRNAs. The protein is Large ribosomal subunit protein uL5 of Azotobacter vinelandii (strain DJ / ATCC BAA-1303).